We begin with the raw amino-acid sequence, 611 residues long: Vitamin B12 transporter BtuB (611 aa).

The first 22 residues, 1 to 22 (MQKSALAIALASLLTPISYLHA), serve as a signal peptide directing secretion. The short motif at 29-36 (ETVVVTAN) is the TonB box element. One can recognise a TBDR plug domain in the interval 41 to 154 (KASSTLADVE…IGGVINIITK (114 aa)). Residues 159–611 (QQGTTVSAGL…AYYLNIGYQF (453 aa)) enclose the TBDR beta-barrel domain. The TonB C-terminal box motif lies at 594–611 (NGYPAAERAYYLNIGYQF).

The protein belongs to the TonB-dependent receptor family. BtuB (TC 1.B.14.3.1) subfamily.

It is found in the cell outer membrane. In terms of biological role, involved in the active translocation of vitamin B12 (cyanocobalamin) across the outer membrane to the periplasmic space. It derives its energy for transport by interacting with the trans-periplasmic membrane protein TonB. In Vibrio cholerae serotype O1 (strain ATCC 39541 / Classical Ogawa 395 / O395), this protein is Vitamin B12 transporter BtuB.